The primary structure comprises 364 residues: FK506-binding protein 4 (364 aa).

Disordered regions lie at residues 92-148 (SMFG…DDEI) and 168-239 (EADK…PTKP). Residues 94–148 (FGDDEHGEDEDNEEEEGEEGEDEEMEGEDEDEDEEDEDEEDEDEEEEDDEEDDEI) are compositionally biased toward acidic residues. Basic and acidic residues predominate over residues 168 to 184 (EADKNKQQKKPKQEEPV). The segment covering 185-239 (KQVTPVKPTAQAAKPTAATTTTTTTTTTTPTKQTTPAKPAAKPVTPTKPVTPTKP) has biased composition (low complexity). Residues 277 to 363 (GKKVGVKYIG…IFDVELVSCA (87 aa)) enclose the PPIase FKBP-type domain.

The protein belongs to the FKBP-type PPIase family. Binds to histones H3 and H4.

It is found in the nucleus. It catalyses the reaction [protein]-peptidylproline (omega=180) = [protein]-peptidylproline (omega=0). With respect to regulation, inhibited by both FK506 and rapamycin. Its function is as follows. PPIase that acts as a histone chaperone. Histone proline isomerase that increases the rate of cis-trans isomerization at prolines on the histone H3 N-terminal tail. Proline isomerization influences H3 methylation thereby regulating gene expression. The chain is FK506-binding protein 4 (fkbp4) from Dictyostelium discoideum (Social amoeba).